We begin with the raw amino-acid sequence, 479 residues long: Alliin lyase (479 aa).

Residues 1-25 (MESYDKVGSNKVPCLLILTCIIMSS) form the signal peptide. Residues 26 to 34 (FVNNNIVQA) constitute a propeptide that is removed on maturation. Residues 47 to 93 (EAVANINCSGHGRAFLDGILSDGSPKCECNTCYTGADCSEKITGCSA) enclose the EGF-like; atypical domain. Asn53 carries N-linked (GlcNAc...) asparagine glycosylation. 3 cysteine pairs are disulfide-bonded: Cys54/Cys73, Cys75/Cys84, and Cys78/Cys91. 126–134 (YFFNPVSNF) is a chloride binding site. Asn180 and Asn225 each carry an N-linked (GlcNAc...) asparagine glycan. Residue Lys285 is modified to N6-(pyridoxal phosphate)lysine. Asn342 and Asn362 each carry an N-linked (GlcNAc...) asparagine glycan. Cys402 and Cys410 form a disulfide bridge.

It belongs to the alliinase family. Homodimer. Pyridoxal 5'-phosphate serves as cofactor.

Its subcellular location is the vacuole. The catalysed reaction is an S-alkyl-L-cysteine S-oxide = an S-alkyl sulfenate + 2-aminoprop-2-enoate. In Allium cepa (Onion), this protein is Alliin lyase.